Reading from the N-terminus, the 181-residue chain is MSIEQLKEQIPDFAKDVRLNLSSMASDESLSPQAKYGLFVACAIATRNPTVTAALEAVAAAHLSAAALTAAKTAAALMAMNNVYYRFVHLATNKEYATMPARLRMNAIANPGVDKADFELWSLAVSAINGCGTCIDAHERVLKEAGVSAASIQTAVRFAAIIQSVAVAIEAAAVTVPLAAE.

C131 serves as the catalytic Proton donor. C131 and C134 are joined by a disulfide. C134 (cysteine sulfenic acid (-SOH) intermediate) is an active-site residue.

It belongs to the AhpD family.

The enzyme catalyses N(6)-[(R)-dihydrolipoyl]-L-lysyl-[lipoyl-carrier protein] + a hydroperoxide = N(6)-[(R)-lipoyl]-L-lysyl-[lipoyl-carrier protein] + an alcohol + H2O. Antioxidant protein with alkyl hydroperoxidase activity. Required for the reduction of the AhpC active site cysteine residues and for the regeneration of the AhpC enzyme activity. The protein is Alkyl hydroperoxide reductase AhpD of Bradyrhizobium sp. (strain BTAi1 / ATCC BAA-1182).